Here is a 368-residue protein sequence, read N- to C-terminus: N-acetylneuraminate epimerase 2 (368 aa).

The first 19 residues, 1–19 (MNKTITALAILMASFAANA), serve as a signal peptide directing secretion. Kelch repeat units lie at residues 40–84 (TVYI…AFID), 86–137 (NLYV…FVHN), 139–173 (KAYV…KINA), 174–219 (YYFD…VNKG), 222–265 (TWLI…VAGG), 287–336 (ENYQ…LWNN), and 338–367 (LLII…VTVQ). Glu228 functions as the Proton acceptor in the catalytic mechanism.

This sequence belongs to the NanM family. Homodimer.

The protein localises to the periplasm. It catalyses the reaction N-acetyl-alpha-neuraminate = N-acetyl-beta-neuraminate. In terms of biological role, converts alpha-N-acetylneuranimic acid (Neu5Ac) to the beta-anomer, accelerating the equilibrium between the alpha- and beta-anomers. Probably facilitates sialidase-negative bacteria to compete successfully for limited amounts of extracellular Neu5Ac, which is likely taken up in the beta-anomer. In addition, the rapid removal of sialic acid from solution might be advantageous to the bacterium to damp down host responses. In Escherichia coli O6:H1 (strain CFT073 / ATCC 700928 / UPEC), this protein is N-acetylneuraminate epimerase 2.